Here is a 165-residue protein sequence, read N- to C-terminus: Methylated-DNA--protein-cysteine methyltransferase (165 aa).

C126 serves as the catalytic Nucleophile; methyl group acceptor.

The protein belongs to the MGMT family.

It is found in the cytoplasm. The catalysed reaction is a 6-O-methyl-2'-deoxyguanosine in DNA + L-cysteinyl-[protein] = S-methyl-L-cysteinyl-[protein] + a 2'-deoxyguanosine in DNA. It catalyses the reaction a 4-O-methyl-thymidine in DNA + L-cysteinyl-[protein] = a thymidine in DNA + S-methyl-L-cysteinyl-[protein]. Involved in the cellular defense against the biological effects of O6-methylguanine (O6-MeG) and O4-methylthymine (O4-MeT) in DNA. Repairs the methylated nucleobase in DNA by stoichiometrically transferring the methyl group to a cysteine residue in the enzyme. This is a suicide reaction: the enzyme is irreversibly inactivated. This Mycolicibacterium paratuberculosis (strain ATCC BAA-968 / K-10) (Mycobacterium paratuberculosis) protein is Methylated-DNA--protein-cysteine methyltransferase.